We begin with the raw amino-acid sequence, 158 residues long: MNLTHINEEGRARMVDVSDKDETKREAVAIGSIYMKSETLRRIHEGTIKKGDVLAVAQVAGIMAAKNTSHMIPMCHPIMITGCDISFSLDFENSKIDIKAVVKTVGQTGVEMEALTAVTVAALTIYDMCKAIDRDMVISEIMLVKKSGGKSGLYEREV.

Substrate contacts are provided by residues 74-76 (MCH) and 112-113 (ME). Asp127 is a catalytic residue.

The protein belongs to the MoaC family. Homohexamer; trimer of dimers.

The enzyme catalyses (8S)-3',8-cyclo-7,8-dihydroguanosine 5'-triphosphate = cyclic pyranopterin phosphate + diphosphate. Its pathway is cofactor biosynthesis; molybdopterin biosynthesis. Its function is as follows. Catalyzes the conversion of (8S)-3',8-cyclo-7,8-dihydroguanosine 5'-triphosphate to cyclic pyranopterin monophosphate (cPMP). The polypeptide is Cyclic pyranopterin monophosphate synthase (Thermoanaerobacter sp. (strain X514)).